The following is a 316-amino-acid chain: Nautilin-63 (316 aa).

Disordered regions lie at residues 1–26 (IPDLASSRSTLPVLTKGPTGLLGPRG), 149–173 (PFPTSRSTYGPSGSQPGKKGVVTPF), 189–238 (DSRC…GIAS), and 259–278 (PPTSPFFTGPSGYTSDGLNK). Residues 10–26 (TLPVLTKGPTGLLGPRG) show a composition bias toward low complexity. Composition is skewed to polar residues over residues 152–163 (TSRSTYGPSGSQ), 207–216 (GHSSPATLNS), and 269–278 (SGYTSDGLNK).

Glycosylated; contains mainly glucose, galactose, galactosamine, glucosamine and glucuronic acid. As to expression, component of the acid-soluble organic matrix of nacreous shell layers (at protein level).

Its subcellular location is the secreted. In terms of biological role, involved in nacre formation. Affects morphology of calcite crystals in vitro but does not inhibit their formation. Binds chitin. This chain is Nautilin-63, found in Nautilus macromphalus (Bellybutton nautilus).